A 131-amino-acid polypeptide reads, in one-letter code: DPGCLPDWSSYKGHCYKVFKKVGTWEDAEKFCVENSGHLASIDSKEEADFVTKLASQTLTKFVYDAWIGLRDESKTQQCSPQWTDGSSVVYENVDEPTKCFGLDVHTEYRTWTDLPCGEKNPFICKSRLPH.

Intrachain disulfides connect Cys4–Cys15, Cys32–Cys125, and Cys100–Cys117. The 116-residue stretch at 11-126 (YKGHCYKVFK…CGEKNPFICK (116 aa)) folds into the C-type lectin domain.

Belongs to the snaclec family. Heterodimer of subunits alpha and beta; disulfide-linked. Expressed by the venom gland.

Its subcellular location is the secreted. In terms of biological role, snaclec that binds to von Willebrand factor (VWF) and induces its interaction with GPIbalpha (GP1BA) (via the vWF A1 domain), resulting in platelet aggregation. The protein is Snaclec bitiscetin subunit alpha of Bitis arietans (African puff adder).